Consider the following 24-residue polypeptide: Defensin D5 (24 aa).

It belongs to the DEFL family. Group IV subfamily. In terms of tissue distribution, distributed in the epidermal cell layer of leaves and in the subepidermal layer region of stems. Not in roots.

It localises to the secreted. It is found in the cell wall. Antimicrobial peptide. Active against Fusarium spp., Gram-positive and Gram-negative bacterial pathogens. The chain is Defensin D5 from Spinacia oleracea (Spinach).